We begin with the raw amino-acid sequence, 356 residues long: Arginine kinase Scy s 2 (356 aa).

The region spanning 9–91 (KLEEGFKKLE…FDPIIEDYHK (83 aa)) is the Phosphagen kinase N-terminal domain. 64–68 (GVGVY) is an L-arginine binding site. One can recognise a Phosphagen kinase C-terminal domain in the interval 119–356 (FVISTRVRCG…LELIKMEKEM (238 aa)). ATP-binding positions include 122–126 (STRVR) and His-185. An L-arginine-binding site is contributed by Glu-225. Arg-229 is an ATP binding site. Cys-271 serves as a coordination point for L-arginine. ATP-binding positions include 280-284 (RASVH) and 309-314 (RGTRGE). Glu-314 is an L-arginine binding site.

The protein belongs to the ATP:guanido phosphotransferase family. As to expression, muscle (at protein level).

The enzyme catalyses L-arginine + ATP = N(omega)-phospho-L-arginine + ADP + H(+). Its function is as follows. Catalyzes the reversible transfer of high energy ATP gamma-phosphate group to L-arginine. In Scylla serrata (Mud crab), this protein is Arginine kinase Scy s 2.